The primary structure comprises 240 residues: 7-cyano-7-deazaguanine synthase (240 aa).

9–19 (FSGGLDSTACL) contributes to the ATP binding site. Zn(2+)-binding residues include Cys195, Cys210, Cys213, and Cys216.

Belongs to the QueC family. Zn(2+) serves as cofactor.

It catalyses the reaction 7-carboxy-7-deazaguanine + NH4(+) + ATP = 7-cyano-7-deazaguanine + ADP + phosphate + H2O + H(+). Its pathway is purine metabolism; 7-cyano-7-deazaguanine biosynthesis. In terms of biological role, catalyzes the ATP-dependent conversion of 7-carboxy-7-deazaguanine (CDG) to 7-cyano-7-deazaguanine (preQ(0)). The sequence is that of 7-cyano-7-deazaguanine synthase from Pyrococcus furiosus (strain ATCC 43587 / DSM 3638 / JCM 8422 / Vc1).